The primary structure comprises 226 residues: Peroxynitrite isomerase 2 (226 aa).

The GXWXGXG motif lies at 73–79; that stretch reads GVWRGEG. Heme b-binding residues include Lys-189 and His-216.

The protein belongs to the nitrobindin family. Homodimer. The cofactor is heme b.

The catalysed reaction is peroxynitrite = nitrate. The protein operates within nitrogen metabolism. In terms of biological role, heme-binding protein able to scavenge peroxynitrite and to protect free L-tyrosine against peroxynitrite-mediated nitration, by acting as a peroxynitrite isomerase that converts peroxynitrite to nitrate. Therefore, this protein likely plays a role in peroxynitrite sensing and in the detoxification of reactive nitrogen and oxygen species (RNS and ROS, respectively). Is able to bind nitric oxide (NO) in vitro, but may act as a sensor of peroxynitrite levels in vivo. This is Peroxynitrite isomerase 2 from Mycobacterium bovis (strain ATCC BAA-935 / AF2122/97).